The primary structure comprises 204 residues: Small ribosomal subunit protein uS3 (204 aa).

In terms of domain architecture, KH type-2 spans 37–105 (IRSYINESFK…NVEVNVVGVK (69 aa)).

Belongs to the universal ribosomal protein uS3 family. As to quaternary structure, part of the 30S ribosomal subunit. Forms a tight complex with proteins S10 and S14.

Binds the lower part of the 30S subunit head. Binds mRNA in the 70S ribosome, positioning it for translation. The chain is Small ribosomal subunit protein uS3 from Wolbachia pipientis wMel.